Consider the following 503-residue polypeptide: Putative acyl--CoA ligase YdaB (503 aa).

Belongs to the ATP-dependent AMP-binding enzyme family.

This is Putative acyl--CoA ligase YdaB (ydaB) from Bacillus subtilis (strain 168).